The primary structure comprises 332 residues: Heat-inducible transcription repressor HrcA (332 aa).

This sequence belongs to the HrcA family.

In terms of biological role, negative regulator of class I heat shock genes (grpE-dnaK-dnaJ and groELS operons). Prevents heat-shock induction of these operons. The chain is Heat-inducible transcription repressor HrcA from Mycoplasma mobile (strain ATCC 43663 / 163K / NCTC 11711) (Mesomycoplasma mobile).